The chain runs to 747 residues: Polyribonucleotide nucleotidyltransferase (747 aa).

The Mg(2+) site is built by D502 and D508. The 60-residue stretch at 569 to 628 (PRMLTITIDPDKIRDIIGPGGKIIKKIIEETGVEIDVEDDGRVFIASTDAAAGERALKII) folds into the KH domain. In terms of domain architecture, S1 motif spans 638–712 (GKVYNGKVTR…PQGRLKLSRK (75 aa)). The disordered stretch occupies residues 718 to 747 (STVGEGGHRHFRRAGREGGHRGLNNRRQSR).

Belongs to the polyribonucleotide nucleotidyltransferase family. Mg(2+) serves as cofactor.

Its subcellular location is the cytoplasm. It catalyses the reaction RNA(n+1) + phosphate = RNA(n) + a ribonucleoside 5'-diphosphate. Functionally, involved in mRNA degradation. Catalyzes the phosphorolysis of single-stranded polyribonucleotides processively in the 3'- to 5'-direction. In Moorella thermoacetica (strain ATCC 39073 / JCM 9320), this protein is Polyribonucleotide nucleotidyltransferase.